Here is a 495-residue protein sequence, read N- to C-terminus: UDP-glycosyltransferase 73C10 (495 aa).

Catalysis depends on H24, which acts as the Proton acceptor. Residue H24 coordinates an anthocyanidin. The active-site Charge relay is the D129. UDP-alpha-D-glucose-binding residues include Q358, H373, W376, N377, S378, and E381. Residue G396 coordinates an anthocyanidin. The UDP-alpha-D-glucose site is built by D397 and Q398.

Belongs to the UDP-glycosyltransferase family.

It catalyses the reaction oleanolate + UDP-alpha-D-glucose = oleanolate 3-O-beta-D-glucoside + UDP + H(+). In terms of biological role, catalyzes the transfer of a glucose (Glc) moiety from UDP-Glc to the C-3 position of the oleanane sapogenins oleanolate and hederagenin, and to the C-28 carboxylic group of the lupane sapogenin betulinate. The monoglucosylated hederagenin 3-O-beta-D-glucoside is a feeding deterrent of the yellow-striped flea beetle (Phyllotreta nemorum). The polypeptide is UDP-glycosyltransferase 73C10 (Barbarea vulgaris (Yellow rocket)).